Consider the following 274-residue polypeptide: Orotidine 5'-phosphate decarboxylase (274 aa).

A compositionally biased stretch (low complexity) spans 1-15 (MSAGRRSSGGRSAAA). The segment at 1–21 (MSAGRRSSGGRSAAAPRFTPP) is disordered. Substrate-binding positions include Asp32, Lys54, 99–108 (DLKLHDIPAT), Thr154, Arg215, Gln224, Gly244, and Arg245. Lys101 acts as the Proton donor in catalysis.

This sequence belongs to the OMP decarboxylase family. Type 1 subfamily. Homodimer.

The enzyme catalyses orotidine 5'-phosphate + H(+) = UMP + CO2. It participates in pyrimidine metabolism; UMP biosynthesis via de novo pathway; UMP from orotate: step 2/2. Catalyzes the decarboxylation of orotidine 5'-monophosphate (OMP) to uridine 5'-monophosphate (UMP). This chain is Orotidine 5'-phosphate decarboxylase, found in Frankia casuarinae (strain DSM 45818 / CECT 9043 / HFP020203 / CcI3).